We begin with the raw amino-acid sequence, 1399 residues long: Alpha-glucan water dikinase 1, chloroplastic (1399 aa).

The transit peptide at Met1–Ala75 directs the protein to the chloroplast. Val76 bears the N-acetylvaline mark. Positions Leu265–Ile306 are disordered. Polar residues predominate over residues Asn272–Ser283. Basic and acidic residues predominate over residues Gly284–Ile306. The active-site Tele-phosphohistidine intermediate is His1004.

The protein belongs to the PEP-utilizing enzyme family. As to quaternary structure, homodimer. It depends on Mg(2+) as a cofactor.

The protein resides in the plastid. The protein localises to the chloroplast. The enzyme catalyses [(1-&gt;4)-alpha-D-glucosyl](n) + n ATP + n H2O = [(1-&gt;4)-6-phospho-alpha-D-glucosyl](n) + n AMP + n phosphate + 2n H(+). Mediates the incorporation of phosphate into starch-like alpha-glucan, mostly at the C-6 position of glucose units. Acts as an overall regulator of starch mobilization. Required for starch degradation, suggesting that the phosphate content of starch regulates its degradability. This Arabidopsis thaliana (Mouse-ear cress) protein is Alpha-glucan water dikinase 1, chloroplastic.